Reading from the N-terminus, the 251-residue chain is Phosphate import ATP-binding protein PstB 2 (251 aa).

The ABC transporter domain maps to 5–246 (LTTENLSLFY…PVKQETNDYI (242 aa)). 37 to 44 (GPSGCGKS) is an ATP binding site.

Belongs to the ABC transporter superfamily. Phosphate importer (TC 3.A.1.7) family. The complex is composed of two ATP-binding proteins (PstB), two transmembrane proteins (PstC and PstA) and a solute-binding protein (PstS).

The protein resides in the cell membrane. It catalyses the reaction phosphate(out) + ATP + H2O = ADP + 2 phosphate(in) + H(+). Its function is as follows. Part of the ABC transporter complex PstSACB involved in phosphate import. Responsible for energy coupling to the transport system. The sequence is that of Phosphate import ATP-binding protein PstB 2 from Lactiplantibacillus plantarum (strain ATCC BAA-793 / NCIMB 8826 / WCFS1) (Lactobacillus plantarum).